The following is a 102-amino-acid chain: uncharacterized protein (102 aa).

The helical transmembrane segment at 5–27 (IYRSNLVIVITLFVSLSYYHTCF) threads the bilayer.

The protein resides in the host membrane. This is an uncharacterized protein from Microplitis demolitor (Parasitoid wasp).